A 988-amino-acid polypeptide reads, in one-letter code: Voltage-gated delayed rectifier potassium channel KCNH5 (988 aa).

Over 1–217 (MPGGKRGLVA…LHYCAFKTTW (217 aa)) the chain is Cytoplasmic. In terms of domain architecture, PAS spans 12-90 (QNTFLENIVR…VRQTFDNYES (79 aa)). Positions 91-143 (NCFEVLLYKKNRTPVWFYMQIAPIRNEHEKVVLFLCTFKDITLFKQPIEDDST) constitute a PAC domain. The chain crosses the membrane as a helical span at residues 218–238 (DWVILILTFYTAIMVPYNVSF). The Extracellular segment spans residues 239-243 (KTKQN). A helical membrane pass occupies residues 244–264 (NIAWLVLDSVVDVIFLVDIVL). Residues 265-291 (NFHTTFVGPGGEVISDPKLIRMNYLKT) are Cytoplasmic-facing. A helical transmembrane segment spans residues 292–312 (WFVIDLLSCLPYDIINAFENV). The Extracellular segment spans residues 313–319 (DEGISSL). Residues 320–340 (FSSLKVVRLLRLGRVARKLDH) traverse the membrane as a helical; Voltage-sensor segment. Residues 341–346 (YLEYGA) are Cytoplasmic-facing. Residues 347–367 (AVLVLLVCVFGLVAHWLACIW) form a helical membrane-spanning segment. Residues 368–419 (YSIGDYEVIDEVTNTIQIDSWLYQLALSIGTPYRYNTSAGIWEGGPSKDSLY) are Extracellular-facing. N-linked (GlcNAc...) asparagine glycosylation occurs at Asn-403. The segment at residues 420–440 (VSSLYFTMTSLTTIGFGNIAP) is an intramembrane region (pore-forming). The short motif at 432 to 437 (TIGFGN) is the Selectivity filter element. The Extracellular portion of the chain corresponds to 441–446 (TTDVEK). The chain crosses the membrane as a helical span at residues 447 to 467 (MFSVAMMMVGSLLYATIFGNV). The Cytoplasmic portion of the chain corresponds to 468 to 988 (TTIFQQMYAN…PESDKDEIHF (521 aa)). 550 to 667 (AFRLASDGCL…NSFSRNLTLT (118 aa)) is a binding site for a nucleoside 3',5'-cyclic phosphate. The segment at 704–715 (HPVRKLFQKFKQ) is calmodulin-binding. Positions 717-742 (KELRNQGSTQGDPERNQLQVESRSLQ) are disordered. The span at 721–742 (NQGSTQGDPERNQLQVESRSLQ) shows a compositional bias: polar residues. Lys-785 participates in a covalent cross-link: Glycyl lysine isopeptide (Lys-Gly) (interchain with G-Cter in ubiquitin). The interval 838–890 (GLLSEDPKSSDSENSVTKNPLRKTDSCDSGITKSDLRLDKAGEARSPLEHSPI) is disordered. Over residues 871–885 (SDLRLDKAGEARSPL) the composition is skewed to basic and acidic residues. Position 883 is a phosphoserine (Ser-883). The CAD (involved in subunit assembly) stretch occupies residues 909 to 948 (TLQEVKHELKEDIQLLSCRMTALEKQVAEILKILSEKSVP). The disordered stretch occupies residues 969–988 (DIFSVSRPESPESDKDEIHF). The span at 977 to 988 (ESPESDKDEIHF) shows a compositional bias: basic and acidic residues.

It belongs to the potassium channel family. H (Eag) (TC 1.A.1.20) subfamily. Kv10.2/KCNH5 sub-subfamily. Homotetramer. The potassium channel is probably composed of a homo- or heterotetrameric complex of pore-forming alpha subunits that can associate with modulating beta subunits. Heteromultimer with KCNH1/EAG. Detected in brain, skeletal muscle, heart, placenta, lung and liver, and at low levels in kidney.

The protein resides in the membrane. It catalyses the reaction K(+)(in) = K(+)(out). Its function is as follows. Pore-forming (alpha) subunit of a voltage-gated delayed rectifier potassium channel that mediates outward-rectifying potassium currents which, on depolarization, reaches a steady-state level and do not inactivate. The kinetic is characterized by a slow activation time course and a small voltage dependence of the activation time constants, therefore, starts to open at more negative voltages. The activation kinetics depend on the prepulse potential and external divalent cation concentration. The time course of activation is biphasic with a fast and a slowly activating current component. With negative prepulses, the current activation is delayed and slowed down several fold, whereas more positive prepulses speed up activation, therefore the activation rate depends on holding potential. The polypeptide is Voltage-gated delayed rectifier potassium channel KCNH5 (Homo sapiens (Human)).